Reading from the N-terminus, the 136-residue chain is Protein PsiE (136 aa).

4 helical membrane passes run 15–35 (ILQTVLNLGLLCLGLILVVFL), 55–75 (YELVEGLVVYFLYFEFIALIV), 82–102 (FHFPLRYFVYIGITAIVRLII), and 108–128 (PLDVLIYSAAILLLVITLWLC).

Belongs to the PsiE family.

Its subcellular location is the cell inner membrane. The protein is Protein PsiE of Escherichia coli O17:K52:H18 (strain UMN026 / ExPEC).